The chain runs to 57 residues: Large ribosomal subunit protein bL33 (57 aa).

This sequence belongs to the bacterial ribosomal protein bL33 family.

This chain is Large ribosomal subunit protein bL33, found in Shewanella sp. (strain MR-4).